The chain runs to 101 residues: Small ribosomal subunit protein uS10 (101 aa).

The protein belongs to the universal ribosomal protein uS10 family. As to quaternary structure, part of the 30S ribosomal subunit.

Involved in the binding of tRNA to the ribosomes. The polypeptide is Small ribosomal subunit protein uS10 (Flavobacterium johnsoniae (strain ATCC 17061 / DSM 2064 / JCM 8514 / BCRC 14874 / CCUG 350202 / NBRC 14942 / NCIMB 11054 / UW101) (Cytophaga johnsonae)).